A 924-amino-acid chain; its full sequence is Alpha-actinin, sarcomeric (924 aa).

Residues 1 to 250 are actin-binding; the sequence is MMMENGLSME…IMTYVSCYYH (250 aa). Calponin-homology (CH) domains lie at 34-138 and 147-253; these read KQQK…LRFA and MTAK…HAFQ. Spectrin repeat units lie at residues 251-395, 396-510, 511-631, and 632-744; these read AFQG…TVSD, ISNS…RCQR, ICDQ…TAND, and MTRK…TMET. EF-hand domains are found at residues 778–813 and 819–854; these read EQLNEFRSSFNHFDKNRTGRLSPEEFKSCLVSLGYS and QGDLDFQRILAVVDPNNTGYVHFDAFLDFMTRESTD. Ca(2+)-binding residues include Asp-791, Asn-793, Thr-795, Arg-797, and Glu-802.

Belongs to the alpha-actinin family. In terms of assembly, homodimer; antiparallel. Interacts with Smn; the interaction occurs in adult thoracic tissues. In terms of tissue distribution, larval muscle isoform is expressed in the larval body wall, adult muscles of the head and abdomen and supercontractile muscles of the larva and adult. Adult muscle isoform accumulates within adult fibrillar and tubular muscles.

Its subcellular location is the cytoplasm. It is found in the myofibril. The protein resides in the sarcomere. The protein localises to the z line. F-actin cross-linking protein which is thought to anchor actin to a variety of intracellular structures. This is a bundling protein. This Drosophila melanogaster (Fruit fly) protein is Alpha-actinin, sarcomeric (Actn).